The sequence spans 130 residues: uncharacterized protein (130 aa).

Residues 1–20 (MFNCLTKLVILVCLKYVAKA) form the signal peptide.

This is an uncharacterized protein from Saccharomyces cerevisiae (strain ATCC 204508 / S288c) (Baker's yeast).